Reading from the N-terminus, the 138-residue chain is Holo-[acyl-carrier-protein] synthase (138 aa).

Mg(2+)-binding residues include D8 and E54.

This sequence belongs to the P-Pant transferase superfamily. AcpS family. Requires Mg(2+) as cofactor.

Its subcellular location is the cytoplasm. It carries out the reaction apo-[ACP] + CoA = holo-[ACP] + adenosine 3',5'-bisphosphate + H(+). Its function is as follows. Transfers the 4'-phosphopantetheine moiety from coenzyme A to a Ser of acyl-carrier-protein. The chain is Holo-[acyl-carrier-protein] synthase from Roseiflexus sp. (strain RS-1).